A 214-amino-acid chain; its full sequence is Pyridoxine/pyridoxamine 5'-phosphate oxidase (214 aa).

Residues arginine 8–tyrosine 11 and lysine 66 each bind substrate. FMN-binding positions include arginine 61 to lysine 66, phenylalanine 76 to threonine 77, arginine 82, lysine 83, and glutamine 105. Substrate contacts are provided by tyrosine 123, arginine 127, and serine 131. Residues glutamine 140–serine 141 and tryptophan 184 each bind FMN. Arginine 190–histidine 192 lines the substrate pocket. FMN is bound at residue arginine 194.

This sequence belongs to the pyridoxamine 5'-phosphate oxidase family. In terms of assembly, homodimer. Requires FMN as cofactor.

The catalysed reaction is pyridoxamine 5'-phosphate + O2 + H2O = pyridoxal 5'-phosphate + H2O2 + NH4(+). It catalyses the reaction pyridoxine 5'-phosphate + O2 = pyridoxal 5'-phosphate + H2O2. It participates in cofactor metabolism; pyridoxal 5'-phosphate salvage; pyridoxal 5'-phosphate from pyridoxamine 5'-phosphate: step 1/1. Its pathway is cofactor metabolism; pyridoxal 5'-phosphate salvage; pyridoxal 5'-phosphate from pyridoxine 5'-phosphate: step 1/1. Catalyzes the oxidation of either pyridoxine 5'-phosphate (PNP) or pyridoxamine 5'-phosphate (PMP) into pyridoxal 5'-phosphate (PLP). This chain is Pyridoxine/pyridoxamine 5'-phosphate oxidase, found in Burkholderia multivorans (strain ATCC 17616 / 249).